The chain runs to 267 residues: Palmitoyltransferase ZDHHC12 (267 aa).

Topologically, residues methionine 1–serine 9 are cytoplasmic. Residues glycine 10–leucine 30 traverse the membrane as a helical segment. The Lumenal segment spans residues histidine 31–glutamate 43. The helical transmembrane segment at leucine 44–valine 64 threads the bilayer. The Cytoplasmic portion of the chain corresponds to serine 65–proline 140. In terms of domain architecture, DHHC spans arginine 97–alanine 147. Cysteine 127 (S-palmitoyl cysteine intermediate) is an active-site residue. The helical transmembrane segment at leucine 141–tryptophan 161 threads the bilayer. At serine 162–glycine 178 the chain is on the lumenal side. The chain crosses the membrane as a helical span at residues leucine 179–alanine 199. The Cytoplasmic portion of the chain corresponds to serine 200–valine 267.

The protein belongs to the DHHC palmitoyltransferase family.

It localises to the golgi apparatus membrane. The protein resides in the endoplasmic reticulum membrane. The enzyme catalyses L-cysteinyl-[protein] + hexadecanoyl-CoA = S-hexadecanoyl-L-cysteinyl-[protein] + CoA. Palmitoyltransferase that catalyzes the addition of palmitate onto various protein substrates. Has a palmitoyltransferase activity toward gephyrin/GPHN, regulating its clustering at synapses and its function in gamma-aminobutyric acid receptor clustering. Thereby, indirectly regulates GABAergic synaptic transmission. Negatively regulates NLRP3-driven inflammation. Catalyzes NLRP3 palmitoylation, leading to its degradation via the chaperone-mediated autophagy (CMA) process. This is Palmitoyltransferase ZDHHC12 from Mus musculus (Mouse).